A 312-amino-acid polypeptide reads, in one-letter code: Calcium-independent mitochondrial carrier protein SCaMC-3L (312 aa).

Solcar repeat units lie at residues 27-113 (GTLW…SRNF), 121-206 (PSFQ…LRCL), and 217-304 (PSGL…MKKT). 6 consecutive transmembrane segments (helical) span residues 33–50 (LLSG…TAPL), 88–107 (GNGI…FSVF), 131–144 (SLAV…INPM), 182–200 (YLPN…LAVY), 219–243 (GLVS…LTLV), and 279–298 (GMTP…YLVY).

It belongs to the mitochondrial carrier (TC 2.A.29) family. Mainly expressed in testis and at lesser levels in brain.

The protein localises to the mitochondrion inner membrane. The enzyme catalyses Mg(2+)(out) + phosphate(in) + ATP(out) = Mg(2+)(in) + phosphate(out) + ATP(in). It carries out the reaction ADP(out) + phosphate(in) + H(+)(out) = ADP(in) + phosphate(out) + H(+)(in). In terms of biological role, calcium-independent ATP-Mg/Pi exchanger that catalyzes the electroneutral exchange of Mg-ATP or free ADP against an hydrogenphosphate and participates in the net transport of adenine nucleotides across the mitochondria inner membrane. The chain is Calcium-independent mitochondrial carrier protein SCaMC-3L from Rattus norvegicus (Rat).